Here is a 199-residue protein sequence, read N- to C-terminus: MAKILVLYYSMYGHIETLAEAVAEGARRVSGVEVTLKRVPETIPAEAFAKAGGKQDQKAPVASPQELADYDGIIFGTPTRFGNMAGQMRTFLDQTGGLWASGALYGKVGSVFSSTGTGGGQEHTITSTWTTLAHHGFIIVPIGYATPELFDVSHVRGGTPYGATTIAGGDGSRQPSQEELTIARYQGEHVAKITAKLKS.

The Flavodoxin-like domain occupies 4 to 190 (ILVLYYSMYG…TIARYQGEHV (187 aa)). Residues 10-15 (SMYGHI) and 79-81 (TRF) each bind FMN. Tyrosine 12 is an NAD(+) binding site. Tryptophan 99 contributes to the substrate binding site. Residues 114 to 119 (STGTGG) and histidine 134 contribute to the FMN site.

It belongs to the WrbA family. Requires FMN as cofactor.

The enzyme catalyses a quinone + NADH + H(+) = a quinol + NAD(+). It catalyses the reaction a quinone + NADPH + H(+) = a quinol + NADP(+). The protein is NAD(P)H dehydrogenase (quinone) of Serratia proteamaculans (strain 568).